We begin with the raw amino-acid sequence, 475 residues long: tRNA-dihydrouridine(16/17) synthase [NAD(P)(+)]-like (475 aa).

FMN is bound by residues P23 to V25 and Q79. Catalysis depends on C108, which acts as the Proton donor. Residues K147, H175, N208 to N210, and A232 to E233 contribute to the FMN site. Residues G343 to P388 form a disordered region. The span at N373–H383 shows a compositional bias: basic residues.

The protein belongs to the Dus family. Dus1 subfamily. Requires FMN as cofactor.

It is found in the cytoplasm. The protein localises to the nucleus. It catalyses the reaction 5,6-dihydrouridine(16) in tRNA + NADP(+) = uridine(16) in tRNA + NADPH + H(+). It carries out the reaction 5,6-dihydrouridine(16) in tRNA + NAD(+) = uridine(16) in tRNA + NADH + H(+). The enzyme catalyses 5,6-dihydrouridine(17) in tRNA + NAD(+) = uridine(17) in tRNA + NADH + H(+). The catalysed reaction is 5,6-dihydrouridine(17) in tRNA + NADP(+) = uridine(17) in tRNA + NADPH + H(+). Functionally, catalyzes the synthesis of dihydrouridine, a modified base found in the D-loop of most tRNAs. Specifically modifies U16 and U17 in cytoplasmic tRNAs. Affects the level of some mature tRNA and thereby the total cellular translation. The polypeptide is tRNA-dihydrouridine(16/17) synthase [NAD(P)(+)]-like (Dus1l) (Mus musculus (Mouse)).